A 101-amino-acid polypeptide reads, in one-letter code: Protein S100-A3 (101 aa).

2 EF-hand domains span residues 12 to 47 (IVCT…TWTP) and 50 to 85 (FREC…LCLY). Lys26 provides a ligand contact to Ca(2+). An intrachain disulfide couples Cys30 to Cys68. A Citrulline; by PAD3 modification is found at Arg51. The Ca(2+) site is built by Asp63, Asn65, Asp67, Glu69, and Glu74. The Zn(2+) site is built by Cys83, Cys86, His87, and Cys93.

It belongs to the S-100 family. In terms of assembly, homodimer and homotetramer for the citrullinated form. In terms of processing, more than half of the arginine residues undergo citrullination by PAD1 and PAD2. Arg-51 is specifically citrullinated by PAD3 and promotes tetramerization. In terms of tissue distribution, skin specific, specifically expressed in cuticle of pelage follicle.

The protein resides in the cytoplasm. Its function is as follows. Binds both calcium and zinc. May be involved in calcium-dependent cuticle cell differentiation, hair shaft and hair cuticular barrier formation. The sequence is that of Protein S100-A3 (S100a3) from Mus musculus (Mouse).